A 203-amino-acid chain; its full sequence is RNA annealing protein YRA2 (203 aa).

The residue at position 1 (Met1) is an N-acetylmethionine. Disordered stretches follow at residues 1-60 (MDKA…REEP) and 137-203 (QPQR…YMKG). The span at 11–20 (NSHTDSSSNH) shows a compositional bias: polar residues. Positions 47 to 60 (SRSKDRLYREREEP) are enriched in basic and acidic residues. The 75-residue stretch at 64 to 138 (KRIRISKIPL…AKIEVEIYQP (75 aa)) folds into the RRM domain. The span at 139–153 (QRKHSRMNAHNRRKQ) shows a compositional bias: basic residues. Residues 154–164 (TAQEHGRDRPG) show a composition bias toward basic and acidic residues. The segment covering 165 to 180 (SHYRQKPNRVSKKNKG) has biased composition (basic residues).

The protein belongs to the YRA1 family. In terms of assembly, associates with mRNPs. Interacts with YRA1.

It is found in the nucleus. In terms of biological role, involved in export of poly(A) mRNAs from the nucleus. Recruited to the coding sequences as well as poly-A sites of active genes. In Saccharomyces cerevisiae (strain YJM789) (Baker's yeast), this protein is RNA annealing protein YRA2 (YRA2).